The chain runs to 127 residues: Major sperm protein 77/79 (127 aa).

N-acetylalanine is present on Ala2. Residues 9–126 (DIQTQPGTKI…RRKNLPIEYN (118 aa)) enclose the MSP domain.

Sperm.

Its subcellular location is the cell projection. It is found in the pseudopodium. The protein resides in the cytoplasm. It localises to the cytoskeleton. In terms of biological role, central component in molecular interactions underlying sperm crawling. Forms an extensive filament system that extends from sperm villipoda, along the leading edge of the pseudopod. This chain is Major sperm protein 77/79 (msp-77), found in Caenorhabditis elegans.